The sequence spans 557 residues: Potassium-transporting ATPase potassium-binding subunit (557 aa).

Helical transmembrane passes span glycine 5–serine 25, leucine 63–glycine 83, glycine 132–isoleucine 152, leucine 170–isoleucine 190, phenylalanine 253–valine 273, leucine 283–valine 303, valine 329–alanine 349, alanine 356–valine 376, glycine 379–glycine 399, leucine 416–methionine 436, leucine 484–alanine 504, and leucine 526–alanine 546.

Belongs to the KdpA family. As to quaternary structure, the system is composed of three essential subunits: KdpA, KdpB and KdpC.

Its subcellular location is the cell inner membrane. Functionally, part of the high-affinity ATP-driven potassium transport (or Kdp) system, which catalyzes the hydrolysis of ATP coupled with the electrogenic transport of potassium into the cytoplasm. This subunit binds the periplasmic potassium ions and delivers the ions to the membrane domain of KdpB through an intramembrane tunnel. The polypeptide is Potassium-transporting ATPase potassium-binding subunit (Escherichia coli O157:H7).